The primary structure comprises 643 residues: 1-deoxy-D-xylulose-5-phosphate synthase (643 aa).

Thiamine diphosphate-binding positions include His72 and 113 to 115 (GHA). Asp144 serves as a coordination point for Mg(2+). Residues 145-146 (GA), Asn174, Tyr287, and Glu370 contribute to the thiamine diphosphate site. Asn174 contacts Mg(2+).

This sequence belongs to the transketolase family. DXPS subfamily. As to quaternary structure, homodimer. It depends on Mg(2+) as a cofactor. Requires thiamine diphosphate as cofactor.

It catalyses the reaction D-glyceraldehyde 3-phosphate + pyruvate + H(+) = 1-deoxy-D-xylulose 5-phosphate + CO2. The protein operates within metabolic intermediate biosynthesis; 1-deoxy-D-xylulose 5-phosphate biosynthesis; 1-deoxy-D-xylulose 5-phosphate from D-glyceraldehyde 3-phosphate and pyruvate: step 1/1. In terms of biological role, catalyzes the acyloin condensation reaction between C atoms 2 and 3 of pyruvate and glyceraldehyde 3-phosphate to yield 1-deoxy-D-xylulose-5-phosphate (DXP). This Prochlorococcus marinus (strain SARG / CCMP1375 / SS120) protein is 1-deoxy-D-xylulose-5-phosphate synthase.